The chain runs to 310 residues: E3 ubiquitin-protein ligase AIP2 (310 aa).

The segment at 230 to 271 (CCICKENLVIGDKMQELPCKHTFHPPCLKPWLDEHNSCPICR) adopts an RING-type; atypical zinc-finger fold. A coiled-coil region spans residues 276–306 (TDDQKYENWKEREKEAEEERKGAENAVRGGE). The segment covering 285-298 (KEREKEAEEERKGA) has biased composition (basic and acidic residues). The segment at 285–310 (KEREKEAEEERKGAENAVRGGEYMYV) is disordered.

As to quaternary structure, interacts with ABI3 (via C-terminus). Post-translationally, auto-ubiquitinated. Highly expressed in leaves and at lower levels in flowers and seeds.

The protein localises to the nucleus. It localises to the cytoplasm. It carries out the reaction S-ubiquitinyl-[E2 ubiquitin-conjugating enzyme]-L-cysteine + [acceptor protein]-L-lysine = [E2 ubiquitin-conjugating enzyme]-L-cysteine + N(6)-ubiquitinyl-[acceptor protein]-L-lysine.. The protein operates within protein modification; protein ubiquitination. Its function is as follows. E3 ubiquitin-protein ligase that acts as a negative regulator of abscisic acid (ABA) signaling. Mediates ubiquitination and subsequent proteasomal degradation of the transcription factor ABI3. This chain is E3 ubiquitin-protein ligase AIP2 (AIP2), found in Arabidopsis thaliana (Mouse-ear cress).